Consider the following 170-residue polypeptide: Lipoprotein signal peptidase (170 aa).

A run of 3 helical transmembrane segments spans residues 9 to 29 (FNIF…KYLV), 72 to 92 (IFFI…ALKE), and 95 to 117 (CITR…DRLF). Catalysis depends on residues D124 and D146. A helical membrane pass occupies residues 143–163 (NFADSYVVIGMILFLVYDFFI).

It belongs to the peptidase A8 family.

It localises to the cell inner membrane. The catalysed reaction is Release of signal peptides from bacterial membrane prolipoproteins. Hydrolyzes -Xaa-Yaa-Zaa-|-(S,diacylglyceryl)Cys-, in which Xaa is hydrophobic (preferably Leu), and Yaa (Ala or Ser) and Zaa (Gly or Ala) have small, neutral side chains.. Its pathway is protein modification; lipoprotein biosynthesis (signal peptide cleavage). Functionally, this protein specifically catalyzes the removal of signal peptides from prolipoproteins. The protein is Lipoprotein signal peptidase of Borrelia garinii subsp. bavariensis (strain ATCC BAA-2496 / DSM 23469 / PBi) (Borreliella bavariensis).